The following is a 211-amino-acid chain: Large ribosomal subunit protein uL4 (211 aa).

Positions 41–52 are enriched in polar residues; that stretch reads QTNARQGTASTK. The segment at 41-78 is disordered; the sequence is QTNARQGTASTKTRAEVRGGGRKPWRQKGTGRARAGSI. The segment covering 60 to 71 has biased composition (basic residues); it reads GGRKPWRQKGTG.

The protein belongs to the universal ribosomal protein uL4 family. Part of the 50S ribosomal subunit.

In terms of biological role, one of the primary rRNA binding proteins, this protein initially binds near the 5'-end of the 23S rRNA. It is important during the early stages of 50S assembly. It makes multiple contacts with different domains of the 23S rRNA in the assembled 50S subunit and ribosome. Functionally, forms part of the polypeptide exit tunnel. The protein is Large ribosomal subunit protein uL4 of Rippkaea orientalis (strain PCC 8801 / RF-1) (Cyanothece sp. (strain PCC 8801)).